The following is a 231-amino-acid chain: Large ribosomal subunit protein uL1 (231 aa).

It belongs to the universal ribosomal protein uL1 family. Part of the 50S ribosomal subunit.

Functionally, binds directly to 23S rRNA. The L1 stalk is quite mobile in the ribosome, and is involved in E site tRNA release. Protein L1 is also a translational repressor protein, it controls the translation of the L11 operon by binding to its mRNA. The polypeptide is Large ribosomal subunit protein uL1 (Macrococcus caseolyticus (strain JCSC5402) (Macrococcoides caseolyticum)).